Here is a 173-residue protein sequence, read N- to C-terminus: MISKDQLVNEGIRAREVRLIGQNGDQLGIKSRQEALEIAGRANLDLVLVAANAKPPVCRIMDYGKFRFEQQKKEKEARKNQKIINLKEVRLSPTIDEHDFNTKLRNAIKFLEKGDKVKASIRFKGRAITHKEIGQRVLDRFSEACAEVATVETKPKMDGRSMFLMLAPKNEKQ.

Belongs to the IF-3 family. Monomer.

The protein localises to the cytoplasm. IF-3 binds to the 30S ribosomal subunit and shifts the equilibrium between 70S ribosomes and their 50S and 30S subunits in favor of the free subunits, thus enhancing the availability of 30S subunits on which protein synthesis initiation begins. The sequence is that of Translation initiation factor IF-3 from Bacillus subtilis (strain 168).